Reading from the N-terminus, the 119-residue chain is UPF0102 protein Sare_1228 (119 aa).

It belongs to the UPF0102 family.

The chain is UPF0102 protein Sare_1228 from Salinispora arenicola (strain CNS-205).